The sequence spans 311 residues: Malate dehydrogenase (311 aa).

Residues 7-13 (GAAGGIG) and Asp-34 each bind NAD(+). Substrate is bound by residues Arg-81 and Arg-87. NAD(+) is bound by residues Asn-94 and 117 to 119 (ITN). Substrate is bound by residues Asn-119 and Arg-153. His-177 (proton acceptor) is an active-site residue. An NAD(+)-binding site is contributed by Met-227.

This sequence belongs to the LDH/MDH superfamily. MDH type 1 family. In terms of assembly, homodimer.

It carries out the reaction (S)-malate + NAD(+) = oxaloacetate + NADH + H(+). Functionally, catalyzes the reversible oxidation of malate to oxaloacetate. This chain is Malate dehydrogenase, found in Vibrio parahaemolyticus serotype O3:K6 (strain RIMD 2210633).